The sequence spans 985 residues: Rho guanine nucleotide exchange factor 2 (985 aa).

The tract at residues 1-32 is disordered; sequence MSRIESLTRARIDRSKEQATKTREKEKMKEAK. The segment at 39-86 adopts a Phorbol-ester/DAG-type zinc-finger fold; the sequence is GHLFTTISVSGMTMCYACNKSITAKEALICPTCNVTIHNRCKDTLANC. A phosphoserine mark is found at S109, S122, S129, S133, and S137. An interaction with DYNLT1 region spans residues 131 to 161; the sequence is RQSLLGSRRGLSSLSLAKSVSTTNIAGHFND. S143 is subject to Phosphoserine; by PAK4. Phosphoserine is present on residues S151, S163, S172, S174, and S177. Residues 236 to 433 form the DH domain; it reads KKQDVIYELI…KELLSNVDQD (198 aa). K354 carries the post-translational modification N6-acetyllysine. One can recognise a PH domain in the interval 473 to 572; the sequence is KLIHDGCLLW…WIRVIQQSVR (100 aa). Positions 591-615 form a coiled coil; the sequence is LRRIKTKLQQKNQALVELLQMNVEL. 2 positions are modified to phosphoserine: S646 and S649. T680 is subject to Phosphothreonine; by MAPK1 or MAPK3. Residues S692, S710, and S781 each carry the phosphoserine modification. Residue T795 is modified to Phosphothreonine. Positions 797-866 form a coiled coil; it reads EKQATELALL…RQLAALGQNE (70 aa). The residue at position 885 (S885) is a Phosphoserine. 2 disordered regions span residues 890–909 and 918–985; these read DALY…DRLD and HRPF…ASES. Y893 carries the post-translational modification Phosphotyrosine. S895 is modified (phosphoserine; by PAK4). Over residues 919–938 the composition is skewed to basic and acidic residues; that stretch reads RPFDDREAQELGSPEDRLQD. Phosphoserine is present on residues S931, S939, and S940. Positions 940–949 are enriched in acidic residues; the sequence is SDPDTCSEEE. Position 944 is a phosphothreonine (T944). Phosphoserine is present on residues S946, S951, S952, S955, and S959.

Found in a complex composed at least of ARHGEF2, NOD2 and RIPK2. Interacts with RIPK2; the interaction mediates tyrosine phosphorylation of RIPK2 by Src kinase CSK. Interacts with RIPK1 and RIPK3. Interacts with YWHAZ/14-3-3 zeta; when phosphorylated at Ser-885. Interacts with the kinases PAK4, AURKA and MAPK1. Interacts with RHOA and RAC1. Interacts with NOD1. Interacts (via the N- terminal zinc finger) with CAPN6 (via domain II). Interacts with DYNLT1. In terms of processing, phosphorylation of Ser-885 by PAK1 induces binding to protein YWHAZ, promoting its relocation to microtubules and the inhibition of its activity. Phosphorylated by AURKA and CDK1 during mitosis, which negatively regulates its activity. Phosphorylation by MAPK1 or MAPK3 increases nucleotide exchange activity. Phosphorylation by PAK4 releases GEF-H1 from the microtubules. Phosphorylated on serine, threonine and tyrosine residues in a RIPK2-dependent manner.

Its subcellular location is the cytoplasm. The protein resides in the cytoskeleton. It localises to the cell junction. The protein localises to the tight junction. It is found in the golgi apparatus. Its subcellular location is the spindle. The protein resides in the cytoplasmic vesicle. Its function is as follows. Activates Rho-GTPases by promoting the exchange of GDP for GTP. May be involved in epithelial barrier permeability, cell motility and polarization, dendritic spine morphology, antigen presentation, leukemic cell differentiation, cell cycle regulation, innate immune response, and cancer. Binds Rac-GTPases, but does not seem to promote nucleotide exchange activity toward Rac-GTPases. May stimulate instead the cortical activity of Rac. Inactive toward CDC42, TC10, or Ras-GTPases. Forms an intracellular sensing system along with NOD1 for the detection of microbial effectors during cell invasion by pathogens. Involved in innate immune signaling transduction pathway promoting cytokine IL6/interleukin-6 and TNF-alpha secretion in macrophage upon stimulation by bacterial peptidoglycans; acts as a signaling intermediate between NOD2 receptor and RIPK2 kinase. Contributes to the tyrosine phosphorylation of RIPK2 through Src tyrosine kinase leading to NF-kappaB activation by NOD2. Overexpression activates Rho-, but not Rac-GTPases, and increases paracellular permeability. Involved in neuronal progenitor cell division and differentiation. Involved in the migration of precerebellar neurons. The protein is Rho guanine nucleotide exchange factor 2 (Arhgef2) of Rattus norvegicus (Rat).